The primary structure comprises 341 residues: Protein CbhE (341 aa).

Over residues 287–297 the composition is skewed to acidic residues; sequence IDEENTSDSSE. The segment at 287-341 is disordered; sequence IDEENTSDSSEEGTSKNRFRDTLFSNVPDSSSDSENEQEREKKELAGKTPSFRLC. Residues 323–332 show a composition bias toward basic and acidic residues; sequence EQEREKKELA.

It is found in the cytoplasm. Functionally, may be involved in the pathogenesis of acute Q fever. The chain is Protein CbhE (cbhE) from Coxiella burnetii (strain RSA 493 / Nine Mile phase I).